Here is a 457-residue protein sequence, read N- to C-terminus: Toxin and drug export protein A (457 aa).

Residues 1 to 23 (MFTIKKLTLTIVVATTLTGCANI) form the signal peptide.

Belongs to the outer membrane factor (OMF) (TC 1.B.17) family. In terms of assembly, homotrimer. Probably part of a complex composed of LtxB, LtxD and TdeA, which forms a single transport channel across the two membranes.

The protein resides in the cell outer membrane. Required for secretion of the LtxA leukotoxin and resistance to various antimicrobial compounds. The sequence is that of Toxin and drug export protein A from Aggregatibacter actinomycetemcomitans (Actinobacillus actinomycetemcomitans).